The sequence spans 51 residues: Cuticle protein CP575 (51 aa).

A Chitin-binding type R&amp;R domain is found at 1–51; that stretch reads GDIIDVDNDLFEHEQDGVAGTSVHGEYEAYDAYGNEYEVKYIADHLGFRVL.

As to expression, calcified shell.

The protein is Cuticle protein CP575 of Cancer pagurus (Rock crab).